A 2510-amino-acid chain; its full sequence is Highly reducing polyketide synthase g433 (2510 aa).

The segment at 1–54 is disordered; sequence MAPGRTDVTVAENGNGLHTAHNGVSNGTSNGTNGTSHTSNGTNSSAKTTSNGVH. The segment covering 22–45 has biased composition (low complexity); sequence NGVSNGTSNGTNGTSHTSNGTNSS. One can recognise a Ketosynthase family 3 (KS3) domain in the interval 58 to 477; it reads DIPIAIVGMG…GANAHAVIDS (420 aa). Residues C229, H365, and H400 each act as for beta-ketoacyl synthase activity in the active site. The malonyl-CoA:ACP transacylase (MAT) domain stretch occupies residues 574–880; the sequence is FVFTGQGAQW…VPTLVRGQND (307 aa). The segment at 942–1070 is N-terminal hotdog fold; that stretch reads HDLLGCQVFE…GQVKAGRADS (129 aa). The dehydratase (DH) domain stretch occupies residues 942–1226; it reads HDLLGCQVFE…NLRLAPAADD (285 aa). The 288-residue stretch at 942–1229 folds into the PKS/mFAS DH domain; it reads HDLLGCQVFE…LAPAADDTGG (288 aa). H974 (proton acceptor; for dehydratase activity) is an active-site residue. Positions 1083–1229 are C-terminal hotdog fold; it reads PRKVSSTRWY…LAPAADDTGG (147 aa). D1144 functions as the Proton donor; for dehydratase activity in the catalytic mechanism. Residues 1395-1574 form a methyltransferase (CMet) domain region; it reads DFLGLVSHDK…FDGAEAVIYD (180 aa). Residues 1787 to 2097 form an enoyl reductase (ER) (ER) domain region; it reads GSLKTLRWVQ…KGQHMGKLVI (311 aa). Residues 2122–2296 are ketoreductase (KR) domain; sequence SYLLVGGLGG…ASVLDISIIE (175 aa). The 78-residue stretch at 2419-2496 folds into the Carrier domain; that stretch reads SSVSFLANEI…KLGEAAAEGL (78 aa). S2456 bears the O-(pantetheine 4'-phosphoryl)serine mark.

It functions in the pathway mycotoxin biosynthesis. Its function is as follows. Highly reducing polyketide synthase; part of the gene cluster that mediates the biosynthesis of 1233A, a natural compound known as an inhibitor of HMG-CoA synthase in the mevalonate pathway and with antibacterial and antifungal activities. The highly reducing polyketide synthase g433 gene is responsible for the 1233A backbone biosynthesis and the cytochrome P450 monooxygenase g430 catalyzes oxidation of the backbone. This chain is Highly reducing polyketide synthase g433, found in Fusarium sp.